The chain runs to 159 residues: Mitotic-spindle organizing protein 2 (159 aa).

Residues leucine 87–proline 159 form a disordered region. Positions proline 91–glutamate 105 are enriched in polar residues. Omega-N-methylarginine is present on arginine 111. Phosphoserine is present on serine 153.

The protein belongs to the MOZART2 family. In terms of assembly, associates with the gamma-tubulin ring complex (gTuRC) consisting of TUBGCP2, TUBGCP3, TUBGCP4, TUBGCP5 and TUBGCP6 and gamma-tubulin TUBG1 or TUBG2; within the complex, interacts with TUBGCP2; the interaction plays a role in gTuRC activation.

The protein localises to the cytoplasm. It is found in the cytoskeleton. Its subcellular location is the microtubule organizing center. The protein resides in the centrosome. It localises to the spindle. Its function is as follows. Required for the recruitment and the assembly of the gamma-tubulin ring complex (gTuRC) at the centrosome. The gTuRC regulates the minus-end nucleation of alpha-beta tubulin heterodimers that grow into microtubule protafilaments, a critical step in centrosome duplication and spindle formation. The protein is Mitotic-spindle organizing protein 2 (Mzt2) of Mus musculus (Mouse).